Consider the following 176-residue polypeptide: MSRQLNIDALRQNFWKEEYLREKMLRCEWYRKYGSMVKAKQKAKAAARLPLKLPTLHPKAPLSPPPAPKSAPSKVPSPVPEAPFQSEMYPVPPITRALLYEGISHDFQGRYRYLNTRKLDMPETRYLFPITTSFTYGWQLGPPVKQELVSCKMCRIESFFRKNGAFALLDPRDLAL.

Residues 55–80 (TLHPKAPLSPPPAPKSAPSKVPSPVP) form a disordered region. The segment covering 61-80 (PLSPPPAPKSAPSKVPSPVP) has biased composition (pro residues).

In Homo sapiens (Human), this protein is Protein SPMIP1.